A 582-amino-acid chain; its full sequence is Ubiquilin-1 (582 aa).

Disordered stretches follow at residues 1–26 (MAES…AEPK) and 102–136 (RPQD…AANS). A2 carries the post-translational modification N-acetylalanine. Positions 28 to 102 (MKVTVKTPKE…VHLVIKTQNR (75 aa)) constitute a Ubiquitin-like domain. A compositionally biased stretch (polar residues) spans 102 to 135 (RPQDNSAQQTNTTGNSVTSSPAPDSNPTSGPAAN). Residues 169–422 (QLLSNPEMMV…LNNPLFAGNP (254 aa)) form an interaction with UBXN4 region. STI1 domains lie at 173-201 (NPEM…QLIM) and 203-242 (NPQM…MQEM). The interval 285-365 (NPFASLVSSP…NLVPGAGASM (81 aa)) is disordered. Residues 290–304 (LVSSPSSAEGTQPSR) show a composition bias toward polar residues. The segment covering 318 to 346 (QTPQSSPASGSTGSTTNTVSTSAGNATST) has biased composition (low complexity). 2 STI1 domains span residues 381-428 (NPQL…QEQM) and 432-464 (LPTF…QQGL). Residues 481–513 (GLAAGNSGGPAGTTAPSTAPGEDTNPQGGAAEP) are disordered. The region spanning 539 to 579 (RFQQQLEQLSAMGFLNREANLQALIATGGDINAAIERLLGS) is the UBA domain.

Monomer and homodimer. Heterodimer with UBQLN2. Binds CD47. Binds NBL1. Binds GABRA1, GABRA2, GABRA3, GABRA6, GABRB1, GABRB2 and GABRB3. Binds UBE3A, BTRC, P4HB and MTOR. Interacts with the proteasome 19S subunit. Interacts (via ubiquitin-like domain) with TREX1; the interaction is direct and may control TREX1 subcellular location. Forms a complex with UBXN4 and VCP. Interacts (via UBA domain) with UBQLN4 (via ubiquitin-like domain). Found in a complex with UBQLN2 and MAP1LC3A/B/C. The monomeric form interacts with PSEN1 and PSEN2. Interacts with ORAI1. Interacts (via UBA domain) with TICAM1. Interacts with EPS15. Interacts (via UBA domain) with UBA52 and (via ubiquitin-like domain) with PSMD3 and PSMD4. Interacts with HERPUD1. Interacts with MAP1LC3A/B/C in the presence of UBQLN4. Interacts (via ubiquitin-like domain) with EPS15 (via UIM domains) and both the ubiquitinated and non-ubiquitinated forms can interact with EPS15. Interacts (via ubiquitin-like domain) with EPS15L1, HGS (via UIM domain) and STAM2 (via UIM domain). Interacts with BCL2L10/BCL-B; in the cytoplasm. Degraded during both macroautophagy and during chaperone-mediated autophagy (CMA). In terms of processing, phosphorylated. Post-translationally, ubiquitinated.

It is found in the nucleus. It localises to the cytoplasm. The protein resides in the endoplasmic reticulum. Its subcellular location is the cytoplasmic vesicle. The protein localises to the autophagosome. It is found in the cell membrane. Its function is as follows. Plays an important role in the regulation of different protein degradation mechanisms and pathways including ubiquitin-proteasome system (UPS), autophagy and endoplasmic reticulum-associated protein degradation (ERAD) pathway. Mediates the proteasomal targeting of misfolded or accumulated proteins for degradation by binding (via UBA domain) to their polyubiquitin chains and by interacting (via ubiquitin-like domain) with the subunits of the proteasome. Plays a role in the ERAD pathway via its interaction with ER-localized proteins UBXN4, VCP and HERPUD1 and may form a link between the polyubiquitinated ERAD substrates and the proteasome. Plays a role in unfolded protein response (UPR) by attenuating the induction of UPR-inducible genes, DDTI3/CHOP, HSPA5 and PDIA2 during ER stress. Involved in the regulation of macroautophagy and autophagosome formation; required for maturation of autophagy-related protein LC3 from the cytosolic form LC3-I to the membrane-bound form LC3-II and may assist in the maturation of autophagosomes to autolysosomes by mediating autophagosome-lysosome fusion. Negatively regulates the TICAM1/TRIF-dependent toll-like receptor signaling pathway by decreasing the abundance of TICAM1 via the autophagic pathway. Promotes the ubiquitination and lysosomal degradation of ORAI1, consequently down-regulating the ORAI1-mediated Ca2+ mobilization. Suppresses the maturation and proteasomal degradation of amyloid beta A4 protein (A4) by stimulating the lysine 63 (K63)-linked polyubiquitination. Delays the maturation of A4 by sequestering it in the Golgi apparatus and preventing its transport to the cell surface for subsequent processing. Promotes the surface expression of GABA-A receptors. Ubiquitinates BCL2L10 and thereby stabilizes protein abundance. The chain is Ubiquilin-1 (Ubqln1) from Rattus norvegicus (Rat).